Here is an 843-residue protein sequence, read N- to C-terminus: Glycogen phosphorylase, brain form (843 aa).

A2 bears the N-acetylalanine mark. S15 carries the phosphoserine; by PHK; in form phosphorylase A modification. AMP-binding residues include D43, Y197, and R310. The residue at position 197 (Y197) is a Phosphotyrosine. Residue Y473 is modified to Phosphotyrosine. K569 provides a ligand contact to pyridoxal 5'-phosphate. The interval 677 to 678 is pyridoxal 5'-phosphate; the sequence is TG. N6-(pyridoxal phosphate)lysine is present on K681.

The protein belongs to the glycogen phosphorylase family. In terms of assembly, homodimer. Dimers associate into a tetramer to form the enzymatically active phosphorylase A. It depends on pyridoxal 5'-phosphate as a cofactor. Phosphorylation of Ser-15 converts phosphorylase B (unphosphorylated) to phosphorylase A.

The catalysed reaction is [(1-&gt;4)-alpha-D-glucosyl](n) + phosphate = [(1-&gt;4)-alpha-D-glucosyl](n-1) + alpha-D-glucose 1-phosphate. Its activity is regulated as follows. Activity of phosphorylase is controlled both by allosteric means (through the non-covalent binding of metabolites) and by covalent modification. Thus AMP allosterically activates, whereas ATP, ADP, and glucose-6-phosphate allosterically inhibit, phosphorylase B. Its function is as follows. Glycogen phosphorylase that regulates glycogen mobilization. Phosphorylase is an important allosteric enzyme in carbohydrate metabolism. Enzymes from different sources differ in their regulatory mechanisms and in their natural substrates. However, all known phosphorylases share catalytic and structural properties. In Pongo abelii (Sumatran orangutan), this protein is Glycogen phosphorylase, brain form (PYGB).